The following is a 219-amino-acid chain: Probable lipoprotein YiaD (219 aa).

Residues 1-20 (MKKRVYLIAAVVSGALAVSG) form the signal peptide. The N-palmitoyl cysteine moiety is linked to residue Cys-21. Cys-21 is lipidated: S-diacylglycerol cysteine. A run of 2 helical transmembrane segments spans residues 37 to 55 (IGAGLGSLVGAGIGALSSS) and 62 to 84 (GALIGAAAGAALGGGVGYYMDVQ). An OmpA-like domain is found at 103–219 (GDNIILNMPN…RRVEITLSPL (117 aa)).

Its subcellular location is the cell inner membrane. The protein resides in the cell outer membrane. Its function is as follows. Suppresses temperature-sensitive mutations in BamB when overexpressed. In Escherichia coli (strain K12), this protein is Probable lipoprotein YiaD (yiaD).